The primary structure comprises 357 residues: MSLTRLLIRDFRNIETADLALSPGFNFLVGANGSGKTSVLEAIYTLGHGRAFRSLQIGRVIRHEQEAFVLHGRLQGEERETAIGLTKDKQGDSKVRIDGTDGHKVAELAHLMPMQLITPEGFTLLNGGPKYRRAFLDWGCFHNEPGFFTAWSNLKRLLKQRNAALRQVTRYEQLRPWDKELIPLAEQISTWRAEYSAGIAADMADTCKQFLPEFTLTFSFQRGWEKETEYAEVLERNFERDRQLTYTAHGPHKADLRIRADGAPVEDTLSRGQLKLLMCALRLAQGEFLTRESGRRCLYLIDDFASELDDERRGLLASRLKATQSQVFVSAISAEHVIDMSDENSKMFTVEKGKITD.

Position 30 to 37 (30 to 37 (GANGSGKT)) interacts with ATP.

It belongs to the RecF family.

The protein resides in the cytoplasm. Functionally, the RecF protein is involved in DNA metabolism; it is required for DNA replication and normal SOS inducibility. RecF binds preferentially to single-stranded, linear DNA. It also seems to bind ATP. The protein is DNA replication and repair protein RecF of Escherichia coli O7:K1 (strain IAI39 / ExPEC).